A 362-amino-acid polypeptide reads, in one-letter code: Peptide chain release factor 1 (362 aa).

Gln238 is subject to N5-methylglutamine.

The protein belongs to the prokaryotic/mitochondrial release factor family. Post-translationally, methylated by PrmC. Methylation increases the termination efficiency of RF1.

The protein resides in the cytoplasm. In terms of biological role, peptide chain release factor 1 directs the termination of translation in response to the peptide chain termination codons UAG and UAA. The chain is Peptide chain release factor 1 from Psychrobacter cryohalolentis (strain ATCC BAA-1226 / DSM 17306 / VKM B-2378 / K5).